The following is a 321-amino-acid chain: Malate dehydrogenase (321 aa).

Residues 10-15 (GGGQIG) and Asp34 each bind NAD(+). The substrate site is built by Arg83 and Arg89. NAD(+)-binding positions include Asn96 and 119-121 (ISN). Substrate-binding residues include Asn121 and Arg152. His176 serves as the catalytic Proton acceptor.

This sequence belongs to the LDH/MDH superfamily. MDH type 3 family.

It carries out the reaction (S)-malate + NAD(+) = oxaloacetate + NADH + H(+). Catalyzes the reversible oxidation of malate to oxaloacetate. In Trichlorobacter lovleyi (strain ATCC BAA-1151 / DSM 17278 / SZ) (Geobacter lovleyi), this protein is Malate dehydrogenase.